Consider the following 304-residue polypeptide: Galactose 1-dehydrogenase (304 aa).

It belongs to the Gfo/Idh/MocA family. As to quaternary structure, homodimer.

The protein resides in the cytoplasm. The catalysed reaction is D-galactose + NAD(+) = D-galactono-1,4-lactone + NADH + H(+). Its pathway is carbohydrate metabolism; galactose metabolism. In terms of biological role, catalyzes the dehydrogenation of D-galactose by either NAD(+) or NADP(+). Oxidizes following sugars in decreasing order: D-fucose &gt; D-galactose &gt; L-arabinose &gt; 2-deoxy-D-galactose &gt;&gt; 4-deoxy-D-galactose &gt; 2-deoxy-2-amino-D-galactose. The protein is Galactose 1-dehydrogenase (gal) of Pseudomonas fluorescens.